The chain runs to 611 residues: ATP-dependent zinc metalloprotease FtsH (611 aa).

A topological domain (cytoplasmic) is located at residue Met-1. The helical transmembrane segment at 2–22 threads the bilayer; the sequence is VKNLIFWLVITVVLMSIFQNF. Residues 23-98 are Extracellular-facing; it reads NTNDVNNHKV…IGAIPEEPSL (76 aa). The helical transmembrane segment at 99-119 threads the bilayer; sequence FISILISWFPMLLLIGVWIFF. The Cytoplasmic portion of the chain corresponds to 120 to 611; sequence MRQMQMGGGK…KGWIETDTNK (492 aa). 192–199 provides a ligand contact to ATP; sequence GPPGTGKT. His-414 serves as a coordination point for Zn(2+). Residue Glu-415 is part of the active site. Zn(2+) contacts are provided by His-418 and Asp-492.

The protein in the central section; belongs to the AAA ATPase family. It in the C-terminal section; belongs to the peptidase M41 family. In terms of assembly, homohexamer. Zn(2+) serves as cofactor.

It is found in the cell membrane. Functionally, acts as a processive, ATP-dependent zinc metallopeptidase for both cytoplasmic and membrane proteins. Plays a role in the quality control of integral membrane proteins. In Buchnera aphidicola subsp. Acyrthosiphon pisum (strain APS) (Acyrthosiphon pisum symbiotic bacterium), this protein is ATP-dependent zinc metalloprotease FtsH.